An 878-amino-acid chain; its full sequence is MEVKGPSGRSFCCESEGQFKSCLKRHTPSLLLPSSWKGNSGSCLMAEALHRTSPTPNSCPLPLPLCRMSGVLCSRNLFTFKFSLFQLDSGASGEPGHSLGLTLGFSYCGNCQTAVVSAQPEGMASNGAYPVLGPGVTANPGTSLSVFTALPFTTPAPGPAHGPLLVTAGAPPGGPLVLSTFPSTPLVTEQDGCGPSGAGASNVFVQMRTEVGPVKAAQAQTLVLTQAPLVWQAPGALCGGVVCPPPLLLAAAPVVPVMAAQVVGGTQACEGGWSQGLPLPPPPPPAAQLPPIVSQGNAGPWPQGAHGESSLASSQAKAPPDDSCNPRSVYENFRLWQHYKPLARRHLPQSPDTEALSCFLIPVLRSLARRKPTMTLEEGLWRAMREWQHTSNFDRMIFYEMAEKFLEFEAEEEMQIQKSQWMKGPQCLPPPATPRLEPRGPPAPEVVKQPVYLPSKAGPKAPTACLPPPRPQRPVTKARRPPPRPHRRAETKARLPPPRPQRPAETKVPEEIPPEVVQEYVDIMEELLGPSLGATGEPEKQREEGKVKQPQEEDWTPPDPGLLSYIDKLCSQKDFVTKVEAVIHPQFLEELLSPDPQMDFLALSQDLEQEEGLTLAQLVEKRLPPLKEKQHARAAPSRGTARLDSSSSKFAAGQGAERDVPDPQQGVGMETCPPQMTARDSQGRGRAHTGMARSEDSVVLLGCQDSPGLRAAWPTSPPQDHRPTCPGVGTKDALDLPGGSPVRESHGLAQGSSEEEELPSLAFLLGSQHKLLPWWLPQSPVPASGLLSPEKWGPQGTHQSPSAERRGLNLAPSPANKAKKRPLFGSLSPAEKTPYPGPGLRVSGEQSLTWGLGGPSQSQKRKGDPLVSRKEKKQHCSQ.

Disordered stretches follow at residues 273 to 324, 417 to 512, 527 to 560, 624 to 693, 709 to 757, and 775 to 878; these read WSQG…DDSC, QKSQ…PEEI, LLGPSLGATGEPEKQREEGKVKQPQEEDWTPPDP, PPLK…GMAR, LRAA…EEEE, and WLPQ…HCSQ. Composition is skewed to pro residues over residues 278–288 and 427–444; these read PLPPPPPPAAQ and CLPPPATPRLEPRGPPAP. Over residues 476-487 the composition is skewed to basic residues; that stretch reads TKARRPPPRPHR. The segment covering 537–551 has biased composition (basic and acidic residues); that stretch reads EPEKQREEGKVKQPQ.

This sequence belongs to the NUT family.

In Homo sapiens (Human), this protein is NUT family member 2B (NUTM2B).